We begin with the raw amino-acid sequence, 255 residues long: Octanoyltransferase (255 aa).

The interval M1–A21 is disordered. Residues F56–P242 enclose the BPL/LPL catalytic domain. Residues R96–H103, A173–G175, and G186–S188 each bind substrate. Residue C204 is the Acyl-thioester intermediate of the active site.

It belongs to the LipB family.

Its subcellular location is the cytoplasm. The catalysed reaction is octanoyl-[ACP] + L-lysyl-[protein] = N(6)-octanoyl-L-lysyl-[protein] + holo-[ACP] + H(+). It functions in the pathway protein modification; protein lipoylation via endogenous pathway; protein N(6)-(lipoyl)lysine from octanoyl-[acyl-carrier-protein]: step 1/2. Catalyzes the transfer of endogenously produced octanoic acid from octanoyl-acyl-carrier-protein onto the lipoyl domains of lipoate-dependent enzymes. Lipoyl-ACP can also act as a substrate although octanoyl-ACP is likely to be the physiological substrate. The sequence is that of Octanoyltransferase from Paraburkholderia phymatum (strain DSM 17167 / CIP 108236 / LMG 21445 / STM815) (Burkholderia phymatum).